The primary structure comprises 457 residues: UDP-N-acetylmuramoyl-tripeptide--D-alanyl-D-alanine ligase (457 aa).

ATP is bound at residue 113-119; the sequence is GSNGKTT.

This sequence belongs to the MurCDEF family. MurF subfamily.

The protein localises to the cytoplasm. The enzyme catalyses D-alanyl-D-alanine + UDP-N-acetyl-alpha-D-muramoyl-L-alanyl-gamma-D-glutamyl-meso-2,6-diaminopimelate + ATP = UDP-N-acetyl-alpha-D-muramoyl-L-alanyl-gamma-D-glutamyl-meso-2,6-diaminopimeloyl-D-alanyl-D-alanine + ADP + phosphate + H(+). It participates in cell wall biogenesis; peptidoglycan biosynthesis. Its function is as follows. Involved in cell wall formation. Catalyzes the final step in the synthesis of UDP-N-acetylmuramoyl-pentapeptide, the precursor of murein. The sequence is that of UDP-N-acetylmuramoyl-tripeptide--D-alanyl-D-alanine ligase from Bacillus subtilis (strain 168).